We begin with the raw amino-acid sequence, 206 residues long: MLGLIGKKVGMTQIFQKNGIVVPVTVIEFQPNYIIGKKTVDRDGYSALIAGSVDLKSSKVSKPIKGQYKSLKDIEPKRYVIELKGLDGYDAGDEIKVDVFKSVKYVDVTGTTKGKGFQGAMKRHNFSGGPSSHGSKFHRHLGGTGQATTPARTFKGTKMAGRMGGNQQTIQNLEVVLIDEEKRALLVKGAVPGAKGSFVVVKKSKK.

Residues 127 to 151 form a disordered region; sequence SGGPSSHGSKFHRHLGGTGQATTPA.

The protein belongs to the universal ribosomal protein uL3 family. In terms of assembly, part of the 50S ribosomal subunit. Forms a cluster with proteins L14 and L19.

In terms of biological role, one of the primary rRNA binding proteins, it binds directly near the 3'-end of the 23S rRNA, where it nucleates assembly of the 50S subunit. This is Large ribosomal subunit protein uL3 from Borreliella burgdorferi (strain ZS7) (Borrelia burgdorferi).